Reading from the N-terminus, the 534-residue chain is Autophagic-related protein 16.2 (534 aa).

WD repeat units follow at residues threonine 243–serine 281, glycine 288–serine 329, glycine 330–serine 368, valine 371–serine 411, glutamate 413–leucine 452, lysine 459–valine 498, and serine 504–arginine 534.

The protein belongs to the WD repeat tipD family. As to quaternary structure, homodimer (via N-terminus). Most likely a component of a complex at least containing atg-5, lgg-3, atg-16.1 and/or atg-16.2. Interacts (via N-terminus) with atg-16.1 (via N-terminus). Interacts (via N-terminus) with atg-5. Interacts (via WD 5-6 repeats) with lgg-2; the interaction is direct. Expressed in neurons, pharyngeal muscles, body wall muscle cells and intestinal cells.

It localises to the cytoplasm. The protein resides in the cell membrane. In terms of biological role, most likely a component of the atg-5-atg-12-atg-16.1/atg-16.2 complex, which is recruited to the preautophagosomal membrane and associates with lgg-2 to promote autophagosome formation. Plays a role in the recruitment of lipidated lgg-1 probably to the autophagosome membrane to promote autophagosome formation. Furthermore, association with atg-5 is required for the nucleation of lgg-1 positive autophagosomes. Although its role in autophagosome formation may be distinct to the role of atg-16.2, it functions in a partially redundant manner with atg-16.1 to regulate autophagic processes. In a daf-18/PTEN- and daf-16/FOXO-dependent manner, required for maintaining the numbers of germ stem cell progenitors in the gonad during the late phases of larval development. The chain is Autophagic-related protein 16.2 from Caenorhabditis elegans.